The following is a 190-amino-acid chain: CASP-like protein 5A3 (190 aa).

2 stretches are compositionally biased toward low complexity: residues 1 to 12 (MRASRPAVHPVE) and 20 to 31 (AAAEGPEAQVEG). A disordered region spans residues 1 to 31 (MRASRPAVHPVEAAPPPPAAAAEGPEAQVEG). At 1–50 (MRASRPAVHPVEAAPPPPAAAAEGPEAQVEGAAHPRGVRMKDPPGAPGTP) the chain is on the cytoplasmic side. The chain crosses the membrane as a helical span at residues 51 to 71 (AGLGLRLAQAFFAAAALAVMA). At 72–81 (STNDFPSVSA) the chain is on the extracellular side. Residues 82–102 (FSYLVAAAILQCLWSLLLAFV) traverse the membrane as a helical segment. Over 103–126 (DIYALLVKRSLRNARAVCIFTIGD) the chain is Cytoplasmic. A helical transmembrane segment spans residues 127-147 (GITGTITLGAACASAGITVLI). The Extracellular segment spans residues 148 to 164 (GNDLNICAENHCASFET). A helical transmembrane segment spans residues 165–185 (ATALAFISWFALAPSCILNFW). Topologically, residues 186-190 (SMASR) are cytoplasmic.

Belongs to the Casparian strip membrane proteins (CASP) family. As to quaternary structure, homodimer and heterodimers.

It localises to the cell membrane. This Zea mays (Maize) protein is CASP-like protein 5A3.